The chain runs to 633 residues: Chaperone protein dnaK2 (633 aa).

Phosphothreonine; by autocatalysis is present on Thr-197. The segment at 600–633 (SNAASQAADGTSSESNNSTEGNDDVIDAEFTESK) is disordered. The span at 608–619 (DGTSSESNNSTE) shows a compositional bias: low complexity. The segment covering 620–633 (GNDDVIDAEFTESK) has biased composition (acidic residues).

The protein belongs to the heat shock protein 70 family.

Functionally, acts as a chaperone. This chain is Chaperone protein dnaK2 (dnaK2), found in Prochlorococcus marinus (strain SARG / CCMP1375 / SS120).